The sequence spans 348 residues: A-type ATP synthase subunit C (348 aa).

The protein belongs to the V-ATPase V0D/AC39 subunit family. In terms of assembly, has multiple subunits with at least A(3), B(3), C, D, E, F, H, I and proteolipid K(x).

It is found in the cell membrane. Component of the A-type ATP synthase that produces ATP from ADP in the presence of a proton gradient across the membrane. The polypeptide is A-type ATP synthase subunit C (Halorubrum lacusprofundi (strain ATCC 49239 / DSM 5036 / JCM 8891 / ACAM 34)).